A 259-amino-acid chain; its full sequence is tRNA wybutosine-synthesizing protein 3 homolog (259 aa).

Phosphoserine is present on S25.

This sequence belongs to the TYW3 family.

The enzyme catalyses 4-demethyl-7-[(3S)-3-amino-3-carboxypropyl]wyosine(37) in tRNA(Phe) + S-adenosyl-L-methionine = 7-[(3S)-3-amino-3-carboxypropyl]wyosine(37) in tRNA(Phe) + S-adenosyl-L-homocysteine + H(+). It participates in tRNA modification; wybutosine-tRNA(Phe) biosynthesis. Its function is as follows. Probable S-adenosyl-L-methionine-dependent methyltransferase that acts as a component of the wybutosine biosynthesis pathway. Wybutosine is a hyper modified guanosine with a tricyclic base found at the 3'-position adjacent to the anticodon of eukaryotic phenylalanine tRNA. The polypeptide is tRNA wybutosine-synthesizing protein 3 homolog (TYW3) (Homo sapiens (Human)).